Reading from the N-terminus, the 485-residue chain is Adenosylhomocysteinase (485 aa).

Substrate-binding residues include T64, D139, and E205. 206-208 (TTT) contacts NAD(+). The substrate site is built by K235 and D239. NAD(+) is bound by residues N240, 269–274 (GYGDVG), E292, N327, 348–350 (IGH), and N397.

The protein belongs to the adenosylhomocysteinase family. As to quaternary structure, homotetramer. NAD(+) is required as a cofactor.

The enzyme catalyses S-adenosyl-L-homocysteine + H2O = L-homocysteine + adenosine. The protein operates within amino-acid biosynthesis; L-homocysteine biosynthesis; L-homocysteine from S-adenosyl-L-homocysteine: step 1/1. Its function is as follows. Adenosylhomocysteine is a competitive inhibitor of S-adenosyl-L-methionine-dependent methyl transferase reactions; therefore adenosylhomocysteinase may play a key role in the control of methylations via regulation of the intracellular concentration of adenosylhomocysteine. The chain is Adenosylhomocysteinase (SAHH) from Catharanthus roseus (Madagascar periwinkle).